Reading from the N-terminus, the 480-residue chain is Alpha,alpha-trehalose-phosphate synthase [UDP-forming] 2 (480 aa).

The D-glucose 6-phosphate site is built by Y97 and D151. The UDP site is built by R288 and K293. 2 residues coordinate UDP-alpha-D-glucose: R288 and K293. R326 contributes to the D-glucose 6-phosphate binding site. 387-395 lines the UDP-alpha-D-glucose pocket; the sequence is DGMNLVSFE. Residue 391-395 participates in UDP binding; sequence LVSFE.

The protein belongs to the glycosyltransferase 20 family.

The catalysed reaction is D-glucose 6-phosphate + UDP-alpha-D-glucose = alpha,alpha-trehalose 6-phosphate + UDP + H(+). Its pathway is carbohydrate biosynthesis. Synthase catalytic subunit of the trehalose synthase complex that catalyzes the production of trehalose from glucose-6-phosphate and UDP-alpha-D-glucose in a two step process. In Aspergillus niger, this protein is Alpha,alpha-trehalose-phosphate synthase [UDP-forming] 2.